The sequence spans 544 residues: Cytochrome P450 monooxygenase tenB (544 aa).

A helical transmembrane segment spans residues 13-33 (LGYYEKVTGILGVVSIILLFW). The span at 438-448 (FDPFRFSRASK) shows a compositional bias: basic and acidic residues. The segment at 438-467 (FDPFRFSRASKDDDDDDDDDGRSTSSHTKD) is disordered. Residue Cys-486 participates in heme binding.

It belongs to the cytochrome P450 family. Requires heme as cofactor.

Its subcellular location is the membrane. The protein operates within secondary metabolite biosynthesis. Functionally, cytochrome P450 monooxygenase; part of the gene cluster that mediates the biosynthesis of tenellin-type 2-pyridones, iron-chelating compounds involved in iron stress tolerance, competition with the natural competitor fungus Metarhizium robertsii and insect hosts infection. TenB catalyzes the selective N-hydroxylation of the 2-pyridone nitrogen of yield tellinin and 15-hydroxytellenin (15-HT), respectively. The pathway begins with the assembly of the polyketide-amino acid backbone by the hybrid PKS-NRPS tenS with the help of the enoyl reductase tenC. These enzymes catalyze the synthesis of the pyrrolidine-2-dione intermediates pretellinin A, 11-hydropretellenin A, 12-hydropretellenin A, 13-hydropretellenin A, 14-hydropretellenin A, 12-oxopretellenin A and prototellinin D. The cytochrome P450 monooxygenase tenA then catalyzes an oxidative ring expansion of pretenellin A and 14-hydropretellenin A to form the 2-pyridone core, leading to pretenellin B and pyridovericin, respectively. The cytochrome P450 monooxygenase tenB is then required for the selective N-hydroxylation of the 2-pyridone nitrogen of yield tellinin and 15-hydroxytellenin (15-HT), respectively. The UDP-glucosyltransferase GT1 and the methyltransferase MT1, located outside the tenS gene cluster, contribute to the stepwise glycosylation and methylation of 15-HT to obtain the glycoside pyridovericin-N-O-(4-O-methyl-beta-D-glucopyranoside) (PMGP). Additional related compounds such as 1-O-methyl-15-HT, (8Z)-1-O-methyl-15-HT, and O-methyltenellin A are also produced but the enzymes involved in their biosynthesis have still to be determined. The protein is Cytochrome P450 monooxygenase tenB of Beauveria bassiana (strain ARSEF 2860) (White muscardine disease fungus).